The chain runs to 543 residues: Carboxypeptidase Y homolog A (543 aa).

The N-terminal stretch at 1–17 is a signal peptide; that stretch reads MRVAASALLAGAASAAV. A propeptide spanning residues 18–128 is cleaved from the precursor; that stretch reads APQQQILKFP…KLEQFDLRVK (111 aa). 5 cysteine pairs are disulfide-bonded: cysteine 182-cysteine 421, cysteine 316-cysteine 330, cysteine 340-cysteine 363, cysteine 347-cysteine 356, and cysteine 385-cysteine 391. Asparagine 213 carries an N-linked (GlcNAc...) asparagine glycan. The active site involves serine 269. Residue aspartate 460 is part of the active site. The N-linked (GlcNAc...) asparagine glycan is linked to asparagine 508. Histidine 519 is an active-site residue.

Belongs to the peptidase S10 family.

It localises to the vacuole. The enzyme catalyses Release of a C-terminal amino acid with broad specificity.. Vacuolar carboxypeptidase involved in degradation of small peptides. Digests preferentially peptides containing an aliphatic or hydrophobic residue in P1' position, as well as methionine, leucine or phenylalanine in P1 position of ester substrate. In Phaeosphaeria nodorum (strain SN15 / ATCC MYA-4574 / FGSC 10173) (Glume blotch fungus), this protein is Carboxypeptidase Y homolog A (CPYA).